The primary structure comprises 149 residues: D-aminoacyl-tRNA deacylase (149 aa).

The short motif at 141–142 is the Gly-cisPro motif, important for rejection of L-amino acids element; that stretch reads GP.

It belongs to the DTD family. In terms of assembly, homodimer.

Its subcellular location is the cytoplasm. The catalysed reaction is glycyl-tRNA(Ala) + H2O = tRNA(Ala) + glycine + H(+). It carries out the reaction a D-aminoacyl-tRNA + H2O = a tRNA + a D-alpha-amino acid + H(+). Its function is as follows. An aminoacyl-tRNA editing enzyme that deacylates mischarged D-aminoacyl-tRNAs. Also deacylates mischarged glycyl-tRNA(Ala), protecting cells against glycine mischarging by AlaRS. Acts via tRNA-based rather than protein-based catalysis; rejects L-amino acids rather than detecting D-amino acids in the active site. By recycling D-aminoacyl-tRNA to D-amino acids and free tRNA molecules, this enzyme counteracts the toxicity associated with the formation of D-aminoacyl-tRNA entities in vivo and helps enforce protein L-homochirality. The protein is D-aminoacyl-tRNA deacylase of Streptomyces griseus subsp. griseus (strain JCM 4626 / CBS 651.72 / NBRC 13350 / KCC S-0626 / ISP 5235).